We begin with the raw amino-acid sequence, 462 residues long: ATP synthase subunit beta (462 aa).

Residue glycine 151–threonine 158 participates in ATP binding.

The protein belongs to the ATPase alpha/beta chains family. F-type ATPases have 2 components, CF(1) - the catalytic core - and CF(0) - the membrane proton channel. CF(1) has five subunits: alpha(3), beta(3), gamma(1), delta(1), epsilon(1). CF(0) has four main subunits: a(1), b(1), b'(1) and c(9-12).

It is found in the cell inner membrane. It catalyses the reaction ATP + H2O + 4 H(+)(in) = ADP + phosphate + 5 H(+)(out). Produces ATP from ADP in the presence of a proton gradient across the membrane. The catalytic sites are hosted primarily by the beta subunits. This Chlorobium chlorochromatii (strain CaD3) protein is ATP synthase subunit beta.